The primary structure comprises 352 residues: Protein RecA (352 aa).

67-74 (GPESSGKT) lines the ATP pocket. The disordered stretch occupies residues 332-352 (VKPADAESKEDSPKLKAVDGF). Basic and acidic residues predominate over residues 335–352 (ADAESKEDSPKLKAVDGF).

This sequence belongs to the RecA family.

It is found in the cytoplasm. In terms of biological role, can catalyze the hydrolysis of ATP in the presence of single-stranded DNA, the ATP-dependent uptake of single-stranded DNA by duplex DNA, and the ATP-dependent hybridization of homologous single-stranded DNAs. It interacts with LexA causing its activation and leading to its autocatalytic cleavage. The sequence is that of Protein RecA from Pseudarthrobacter chlorophenolicus (strain ATCC 700700 / DSM 12829 / CIP 107037 / JCM 12360 / KCTC 9906 / NCIMB 13794 / A6) (Arthrobacter chlorophenolicus).